We begin with the raw amino-acid sequence, 344 residues long: MTQKLTITRPDDWHLHLRDGAALAAVLPDTARQFARAIVMPNLKPPVTTVAQAQAYRARILAALPAGMQFEPLMTLYLTDNTGPEEIAAARASGFVHGVKLYPAGATTNSDAGVTDIRRCYPALEAMQRAGLPLLVHGEVTDPAIDIFDREAVFIERVMTPLRRDMPELKVVFEHITTKDAAQYVRDASGPVGATITAHHLLYNRNAIFTGGIRPHYYCLPVLKRETHREALVAAATSGSERFFLGTDSAPHARGLKEHACGCAGCYTALHAMELYAEAFDAAGALDKLEAFASFNGPAFYGLPRNTGTLTLEREDWELPAELPYGDTTLVPLRGGETLRWKAR.

Zn(2+)-binding residues include H14 and H16. Substrate-binding positions include 16–18 (HLR) and N42. 3 residues coordinate Zn(2+): K100, H137, and H175. N6-carboxylysine is present on K100. A substrate-binding site is contributed by H137. L220 contributes to the substrate binding site. D248 is a binding site for Zn(2+). D248 is an active-site residue. Residues H252 and A264 each coordinate substrate.

This sequence belongs to the metallo-dependent hydrolases superfamily. DHOase family. Class II DHOase subfamily. As to quaternary structure, homodimer. Requires Zn(2+) as cofactor.

It catalyses the reaction (S)-dihydroorotate + H2O = N-carbamoyl-L-aspartate + H(+). It functions in the pathway pyrimidine metabolism; UMP biosynthesis via de novo pathway; (S)-dihydroorotate from bicarbonate: step 3/3. Functionally, catalyzes the reversible cyclization of carbamoyl aspartate to dihydroorotate. The chain is Dihydroorotase from Cupriavidus taiwanensis (strain DSM 17343 / BCRC 17206 / CCUG 44338 / CIP 107171 / LMG 19424 / R1) (Ralstonia taiwanensis (strain LMG 19424)).